Reading from the N-terminus, the 568-residue chain is Sulfite reductase [NADPH] hemoprotein beta-component (568 aa).

[4Fe-4S] cluster-binding residues include Cys-425, Cys-431, Cys-470, and Cys-474. Cys-474 contributes to the siroheme binding site.

The protein belongs to the nitrite and sulfite reductase 4Fe-4S domain family. Alpha(8)-beta(8). The alpha component is a flavoprotein, the beta component is a hemoprotein. It depends on siroheme as a cofactor. [4Fe-4S] cluster is required as a cofactor.

The enzyme catalyses hydrogen sulfide + 3 NADP(+) + 3 H2O = sulfite + 3 NADPH + 4 H(+). Its pathway is sulfur metabolism; hydrogen sulfide biosynthesis; hydrogen sulfide from sulfite (NADPH route): step 1/1. In terms of biological role, component of the sulfite reductase complex that catalyzes the 6-electron reduction of sulfite to sulfide. This is one of several activities required for the biosynthesis of L-cysteine from sulfate. The protein is Sulfite reductase [NADPH] hemoprotein beta-component of Xanthomonas euvesicatoria pv. vesicatoria (strain 85-10) (Xanthomonas campestris pv. vesicatoria).